A 323-amino-acid chain; its full sequence is Elongation factor P--(R)-beta-lysine ligase (323 aa).

Serine 74–glutamate 76 is a binding site for substrate. ATP-binding positions include arginine 98–glutamate 100 and asparagine 107. Tyrosine 116 lines the substrate pocket. ATP is bound at residue glutamate 242–leucine 243. Residue glutamate 249 participates in substrate binding. Glycine 298 is a binding site for ATP.

It belongs to the class-II aminoacyl-tRNA synthetase family. EpmA subfamily. In terms of assembly, homodimer.

The catalysed reaction is D-beta-lysine + L-lysyl-[protein] + ATP = N(6)-((3R)-3,6-diaminohexanoyl)-L-lysyl-[protein] + AMP + diphosphate + H(+). With EpmB is involved in the beta-lysylation step of the post-translational modification of translation elongation factor P (EF-P). Catalyzes the ATP-dependent activation of (R)-beta-lysine produced by EpmB, forming a lysyl-adenylate, from which the beta-lysyl moiety is then transferred to the epsilon-amino group of a conserved specific lysine residue in EF-P. The chain is Elongation factor P--(R)-beta-lysine ligase from Vibrio atlanticus (strain LGP32) (Vibrio splendidus (strain Mel32)).